Reading from the N-terminus, the 338-residue chain is Ribosomal RNA small subunit methyltransferase H (338 aa).

S-adenosyl-L-methionine-binding positions include 53 to 55 (GGH), Asp72, Tyr99, Asp123, and Gln130. Disordered regions lie at residues 276-297 (EITPRSKSKSPEGLPVELPGMG) and 304-323 (TRGAERASEQEVEENPRSAP).

This sequence belongs to the methyltransferase superfamily. RsmH family.

Its subcellular location is the cytoplasm. It catalyses the reaction cytidine(1402) in 16S rRNA + S-adenosyl-L-methionine = N(4)-methylcytidine(1402) in 16S rRNA + S-adenosyl-L-homocysteine + H(+). In terms of biological role, specifically methylates the N4 position of cytidine in position 1402 (C1402) of 16S rRNA. This is Ribosomal RNA small subunit methyltransferase H from Rhodococcus jostii (strain RHA1).